Reading from the N-terminus, the 350-residue chain is Uroporphyrinogen decarboxylase (350 aa).

Substrate is bound by residues 27–31 (RQAGR), F46, D76, Y152, S207, and H321.

It belongs to the uroporphyrinogen decarboxylase family. Homodimer.

The protein localises to the cytoplasm. It catalyses the reaction uroporphyrinogen III + 4 H(+) = coproporphyrinogen III + 4 CO2. It participates in porphyrin-containing compound metabolism; protoporphyrin-IX biosynthesis; coproporphyrinogen-III from 5-aminolevulinate: step 4/4. Catalyzes the decarboxylation of four acetate groups of uroporphyrinogen-III to yield coproporphyrinogen-III. In Listeria welshimeri serovar 6b (strain ATCC 35897 / DSM 20650 / CCUG 15529 / CIP 8149 / NCTC 11857 / SLCC 5334 / V8), this protein is Uroporphyrinogen decarboxylase.